Consider the following 393-residue polypeptide: MGYYSLTEITAVQYAKDHGYFEAKANVVCHEIGDGNLNYVFKLDDGEKSIIIKQALPYAKVVGESWPLSIKRATIESKALQIFAQYVPDYVPAVYSHDEELAITVIEDLSRLTITRKGLIGGEEYPLLSQHIGRFLAHVLFYTSDFGLQSEEKRVLEGTFVNPDLCKITEDLVFTDPFGHYDTNDYEPDLQLVVDELWSDKTLKLKVAQYKYKFLTRKETLIHGDLHTGSIFSSPSETKVIDPEFATYGPFGFDIGQFIANLLLNALSREEEKRSVLFFHIEKTWSYFVETFTKLWIGEGVEVYTKEKQWLPIILQNIFTDAVGFAGCELIRRTIGLAHVADLDEIENKETRIQAKKQALSLGKELIKYESKSADIQLFRTLFQQTVSGGVKA.

ATP contacts are provided by residues asparagine 38, lysine 53, and 107–109 (EDL). Residue aspartate 225 participates in substrate binding. 242–244 (DPE) is a binding site for ATP. A substrate-binding site is contributed by arginine 332.

This sequence belongs to the methylthioribose kinase family. In terms of assembly, homodimer.

It carries out the reaction 5-(methylsulfanyl)-D-ribose + ATP = 5-(methylsulfanyl)-alpha-D-ribose 1-phosphate + ADP + H(+). Its pathway is amino-acid biosynthesis; L-methionine biosynthesis via salvage pathway; S-methyl-5-thio-alpha-D-ribose 1-phosphate from S-methyl-5'-thioadenosine (hydrolase route): step 2/2. In terms of biological role, catalyzes the phosphorylation of methylthioribose into methylthioribose-1-phosphate. This chain is Methylthioribose kinase, found in Bacillus cereus (strain G9842).